Reading from the N-terminus, the 179-residue chain is ATP synthase subunit delta (179 aa).

It belongs to the ATPase delta chain family. In terms of assembly, F-type ATPases have 2 components, F(1) - the catalytic core - and F(0) - the membrane proton channel. F(1) has five subunits: alpha(3), beta(3), gamma(1), delta(1), epsilon(1). F(0) has three main subunits: a(1), b(2) and c(10-14). The alpha and beta chains form an alternating ring which encloses part of the gamma chain. F(1) is attached to F(0) by a central stalk formed by the gamma and epsilon chains, while a peripheral stalk is formed by the delta and b chains.

It localises to the cell inner membrane. Its function is as follows. F(1)F(0) ATP synthase produces ATP from ADP in the presence of a proton or sodium gradient. F-type ATPases consist of two structural domains, F(1) containing the extramembraneous catalytic core and F(0) containing the membrane proton channel, linked together by a central stalk and a peripheral stalk. During catalysis, ATP synthesis in the catalytic domain of F(1) is coupled via a rotary mechanism of the central stalk subunits to proton translocation. Functionally, this protein is part of the stalk that links CF(0) to CF(1). It either transmits conformational changes from CF(0) to CF(1) or is implicated in proton conduction. This Paraburkholderia phytofirmans (strain DSM 17436 / LMG 22146 / PsJN) (Burkholderia phytofirmans) protein is ATP synthase subunit delta.